We begin with the raw amino-acid sequence, 527 residues long: Probable protein kinase UbiB (527 aa).

One can recognise a Protein kinase domain in the interval 123–527 (EFNETALASA…AIWLLIYLLS (405 aa)). ATP contacts are provided by residues 129–137 (LASASIAQV) and Lys161. Catalysis depends on Asp296, which acts as the Proton acceptor. The chain crosses the membrane as a helical span at residues 506-526 (FTSFILGLCTGLAIWLLIYLL).

Belongs to the ABC1 family. UbiB subfamily.

Its subcellular location is the cell inner membrane. It functions in the pathway cofactor biosynthesis; ubiquinone biosynthesis [regulation]. In terms of biological role, is probably a protein kinase regulator of UbiI activity which is involved in aerobic coenzyme Q (ubiquinone) biosynthesis. The sequence is that of Probable protein kinase UbiB from Pasteurella multocida (strain Pm70).